Reading from the N-terminus, the 855-residue chain is DNA mismatch repair protein MutS (855 aa).

613 to 620 (GPNMGGKS) is an ATP binding site. Residues 796–816 (TTSLPHEMPSQQSGKPASPMQ) are disordered.

Belongs to the DNA mismatch repair MutS family.

Its function is as follows. This protein is involved in the repair of mismatches in DNA. It is possible that it carries out the mismatch recognition step. This protein has a weak ATPase activity. The sequence is that of DNA mismatch repair protein MutS from Pseudomonas aeruginosa (strain LESB58).